The chain runs to 111 residues: Dynein light chain Tctex-type (111 aa).

This sequence belongs to the dynein light chain Tctex-type family.

It is found in the cytoplasm. The protein resides in the cytoskeleton. Acts as a non-catalytic accessory component of a dynein complex. This Dictyostelium discoideum (Social amoeba) protein is Dynein light chain Tctex-type (dlcA).